Consider the following 216-residue polypeptide: uncharacterized protein (216 aa).

This is an uncharacterized protein from Acanthamoeba polyphaga mimivirus (APMV).